A 361-amino-acid polypeptide reads, in one-letter code: NudC domain-containing protein 3 (361 aa).

Positions 87 to 97 (KIRRKEEEEAK) are enriched in basic and acidic residues. A disordered region spans residues 87 to 106 (KIRRKEEEEAKTVSAAAAEK). Residue Ser146 is modified to Phosphoserine. The region spanning 185 to 277 (AVRENYTWSQ…VGEYWWNAIL (93 aa)) is the CS domain. Phosphoserine is present on residues Ser340 and Ser355.

The sequence is that of NudC domain-containing protein 3 (NUDCD3) from Pongo abelii (Sumatran orangutan).